The sequence spans 124 residues: Ribonuclease pancreatic (124 aa).

Basic and acidic residues predominate over residues 1 to 13 (SETAAEKFERQHM). The segment at 1-23 (SETAAEKFERQHMDSYSSSSSNS) is disordered. Positions 7 and 10 each coordinate substrate. Residue H12 is the Proton acceptor of the active site. 4 disulfide bridges follow: C26–C84, C40–C95, C58–C110, and C65–C72. Residues 41-45 (KPVNT), K66, and R85 contribute to the substrate site. The Proton donor role is filled by H119.

It belongs to the pancreatic ribonuclease family. Monomer. Interacts with and forms tight 1:1 complexes with RNH1. Dimerization of two such complexes may occur. Interaction with RNH1 inhibits this protein. In terms of tissue distribution, pancreas.

It is found in the secreted. It catalyses the reaction an [RNA] containing cytidine + H2O = an [RNA]-3'-cytidine-3'-phosphate + a 5'-hydroxy-ribonucleotide-3'-[RNA].. The catalysed reaction is an [RNA] containing uridine + H2O = an [RNA]-3'-uridine-3'-phosphate + a 5'-hydroxy-ribonucleotide-3'-[RNA].. Endonuclease that catalyzes the cleavage of RNA on the 3' side of pyrimidine nucleotides. Acts on single-stranded and double-stranded RNA. The polypeptide is Ribonuclease pancreatic (RNASE1) (Camelus dromedarius (Dromedary)).